We begin with the raw amino-acid sequence, 292 residues long: Cbb3-type cytochrome c oxidase subunit CcoP (292 aa).

The next 2 helical transmembrane spans lie at 11–31 and 62–82; these read FGLI…SSLI and VGWI…FFFG. 2 Cytochrome c domains span residues 116–195 and 205–288; these read ELVD…MAEI and QLID…QSLK. Positions 129, 132, 133, 174, 219, 222, 223, and 264 each coordinate heme c.

The protein belongs to the CcoP / FixP family. In terms of assembly, component of the cbb3-type cytochrome c oxidase at least composed of CcoN, CcoO, CcoQ and CcoP. It depends on heme c as a cofactor.

The protein localises to the cell inner membrane. Its pathway is energy metabolism; oxidative phosphorylation. In terms of biological role, C-type cytochrome. Part of the cbb3-type cytochrome c oxidase complex. CcoP subunit is required for transferring electrons from donor cytochrome c via its heme groups to CcoO subunit. From there, electrons are shuttled to the catalytic binuclear center of CcoN subunit where oxygen reduction takes place. The complex also functions as a proton pump. The polypeptide is Cbb3-type cytochrome c oxidase subunit CcoP (Helicobacter pylori (Campylobacter pylori)).